A 303-amino-acid chain; its full sequence is Acetyl-coenzyme A carboxylase carboxyl transferase subunit beta (303 aa).

One can recognise a CoA carboxyltransferase N-terminal domain in the interval Leu-25–Gly-294.

Belongs to the AccD/PCCB family. As to quaternary structure, acetyl-CoA carboxylase is a heterohexamer composed of biotin carboxyl carrier protein (AccB), biotin carboxylase (AccC) and two subunits each of ACCase subunit alpha (AccA) and ACCase subunit beta (AccD).

The protein resides in the cytoplasm. The enzyme catalyses N(6)-carboxybiotinyl-L-lysyl-[protein] + acetyl-CoA = N(6)-biotinyl-L-lysyl-[protein] + malonyl-CoA. It functions in the pathway lipid metabolism; malonyl-CoA biosynthesis; malonyl-CoA from acetyl-CoA: step 1/1. Its function is as follows. Component of the acetyl coenzyme A carboxylase (ACC) complex. Biotin carboxylase (BC) catalyzes the carboxylation of biotin on its carrier protein (BCCP) and then the CO(2) group is transferred by the transcarboxylase to acetyl-CoA to form malonyl-CoA. This chain is Acetyl-coenzyme A carboxylase carboxyl transferase subunit beta, found in Rhizobium rhizogenes (strain K84 / ATCC BAA-868) (Agrobacterium radiobacter).